We begin with the raw amino-acid sequence, 509 residues long: MGCGCSSHLEDDWMENIDVCENCHYPIVPLDGKATLLFRNGSEVRDPLVRYEGSNPPASPLQDNLVIALHSYEPSHDGDLGFEKGEHLRILEQNGEWWKAQSLTTGQEGFVPFNFVAKANSLEPEPWFFKNLSRKDAERQLLAPGNTHGSFLIRESESTAGSFSLSVRDFDQNQGEVVKHYKIRNLDNGGFYISPRITFSGLHELVRHYTNASDGLCTRLSRPCQTQKPQKPWWEDEWEVPRETLKLVERLGAGQFGEVWMGYYNEHTKVAVKSLKQGSMSPDAFLAEANLMKQLQHKRLVRLYAVVTEEPIYIITEYMENGSLVDFLKTPSGIKLTINKLLDMAAQIVEGMAFLEERNYIHRDLRAANILVSDTLSCKIADFGLARLIEDNEYTAREGAKFPIKWTAPEAINYGTFTIKSDVWSFGILMTEIVTHGRIPYPGMTNPEVIQNLERGYRMPRPDNCPEELYKLMMQCWRERPDDRPTFDYLRSVLEDFFTATEGQYQPQP.

Gly2 carries the N-myristoyl glycine lipid modification. The interval 2-72 (GCGCSSHLED…DNLVIALHSY (71 aa)) is interactions with CD4 and CD8. 2 S-palmitoyl cysteine lipidation sites follow: Cys3 and Cys5. Positions 61–121 (LQDNLVIALH…PFNFVAKANS (61 aa)) constitute an SH3 domain. Residue Lys99 forms a Glycyl lysine isopeptide (Lys-Gly) (interchain with G-Cter in ubiquitin) linkage. Ser102 is modified (phosphoserine). Positions 127–224 (WFFKNLSRKD…GLCTRLSRPC (98 aa)) constitute an SH2 domain. The segment at 154 to 242 (RESESTAGSF…WWEDEWEVPR (89 aa)) is interaction with PTPRH. Position 159 is a phosphothreonine (Thr159). Phosphoserine is present on Ser162. Tyr192 bears the Phosphotyrosine mark. Ser194 carries the post-translational modification Phosphoserine. One can recognise a Protein kinase domain in the interval 245–498 (LKLVERLGAG…YLRSVLEDFF (254 aa)). ATP-binding positions include 251 to 259 (LGAGQFGEV) and Lys273. Lys276 participates in a covalent cross-link: Glycyl lysine isopeptide (Lys-Gly) (interchain with G-Cter in ubiquitin). The active-site Proton acceptor is Asp364. Position 394 is a phosphotyrosine; by autocatalysis (Tyr394). Tyr505 carries the post-translational modification Phosphotyrosine; by CSK.

Belongs to the protein kinase superfamily. Tyr protein kinase family. Binds to the cytoplasmic domain of cell surface receptors, such as AXL, CD2, CD4, CD5, CD8, CD44, CD45 and CD122. Also binds to effector molecules, such as PI4K, VAV1, RASA1, FYB1 and to other protein kinases including CDK1, RAF1, ZAP70 and SYK. Binds to phosphatidylinositol 3'-kinase (PI3K) from T-lymphocytes through its SH3 domain and to the tyrosine phosphorylated form of KHDRBS1/p70 through its SH2 domain. Interacts with SQSTM1. Interacts with phosphorylated LIME1. Interacts with CBLB and PTPRH. Interacts with RUNX3. Forms a signaling complex with EPHA1, PTK2B and PI3-KINASE; upon activation by EFNA1 which may regulate T-lymphocytes migration. Associates with ZAP70 and RHOH; these interactions allow LCK-mediated RHOH and CD3 subunit phosphorylations in the presence of functional ZAP70. Interacts with Saimiriine herpesvirus 2 TIP. Interacts with UNC119; this interaction plays a crucial role in activation of LCK. Interacts with CEACAM1 (via cytoplasmic domain); mediates CEACAM1 phosphorylation resulting in PTPN6 recruitment that dephosphorylates TCR stimulation-induced CD247 and ZAP70. Interacts with CD160. Interacts with CD48. Post-translationally, autophosphorylated on Tyr-394, increasing enzymatic activity, this site is dephosphorylated by PTN22. Phosphorylated on Tyr-505 by CSK, decreasing activity. Dephosphorylated by PTPRC/CD45. Dephosphorylation at Tyr-394 by PTPN2 negatively regulates T-cells differentiation. Dephosphorylation at Tyr-394 by DUSP22 negatively regulates T-cell receptor signaling. In terms of processing, myristoylation is required prior to palmitoylation. Palmitoylation regulates association with the plasma membrane and could be mediated by ZDHHC2. Post-translationally, 'Lys-63'-linked ubiquitinated at Lys-99 and Lys-276 by UBR2; this modification is required for autophosphorylation at Tyr-394. In terms of tissue distribution, expressed specifically in lymphoid cells.

The protein resides in the cell membrane. Its subcellular location is the cytoplasm. The protein localises to the cytosol. It catalyses the reaction L-tyrosyl-[protein] + ATP = O-phospho-L-tyrosyl-[protein] + ADP + H(+). Its activity is regulated as follows. The relative activities of the inhibitory tyrosine-protein kinase CSK and the activating tyrosine-protein phosphatase PTPRC/CD45 determine the level of LCK activity. These interactions allow rapid and efficient activation of LCK in response to TCR stimulation. In terms of biological role, non-receptor tyrosine-protein kinase that plays an essential role in the selection and maturation of developing T-cells in the thymus and in the function of mature T-cells. Plays a key role in T-cell antigen receptor (TCR)-linked signal transduction pathways. Constitutively associated with the cytoplasmic portions of the CD4 and CD8 surface receptors. Association of the TCR with a peptide antigen-bound MHC complex facilitates the interaction of CD4 and CD8 with MHC class II and class I molecules, respectively, thereby recruiting the associated LCK protein to the vicinity of the TCR/CD3 complex. LCK then phosphorylates tyrosine residues within the immunoreceptor tyrosine-based activation motifs (ITAM) of the cytoplasmic tails of the TCR-gamma chains and CD3 subunits, initiating the TCR/CD3 signaling pathway. Once stimulated, the TCR recruits the tyrosine kinase ZAP70, that becomes phosphorylated and activated by LCK. Following this, a large number of signaling molecules are recruited, ultimately leading to lymphokine production. LCK also contributes to signaling by other receptor molecules. Associates directly with the cytoplasmic tail of CD2, which leads to hyperphosphorylation and activation of LCK. Also plays a role in the IL2 receptor-linked signaling pathway that controls the T-cell proliferative response. Binding of IL2 to its receptor results in increased activity of LCK. Is expressed at all stages of thymocyte development and is required for the regulation of maturation events that are governed by both pre-TCR and mature alpha beta TCR. Phosphorylates other substrates including RUNX3, PTK2B/PYK2, the microtubule-associated protein MAPT, RHOH or TYROBP. In Saimiri sciureus (Common squirrel monkey), this protein is Proto-oncogene tyrosine-protein kinase LCK (LCK).